The primary structure comprises 544 residues: Chaperonin GroEL 2 (544 aa).

ATP-binding positions include 29 to 32, Lys50, 86 to 90, Gly414, and Asp494; these read TLGP and DGTTT.

This sequence belongs to the chaperonin (HSP60) family. Forms a cylinder of 14 subunits composed of two heptameric rings stacked back-to-back. Interacts with the co-chaperonin GroES.

It is found in the cytoplasm. The catalysed reaction is ATP + H2O + a folded polypeptide = ADP + phosphate + an unfolded polypeptide.. Its function is as follows. Together with its co-chaperonin GroES, plays an essential role in assisting protein folding. The GroEL-GroES system forms a nano-cage that allows encapsulation of the non-native substrate proteins and provides a physical environment optimized to promote and accelerate protein folding. This chain is Chaperonin GroEL 2, found in Psychromonas ingrahamii (strain DSM 17664 / CCUG 51855 / 37).